Here is a 272-residue protein sequence, read N- to C-terminus: MMEWIDENSSLFVPPVCNKLMYGEGQLKIMFVGGPNTRKDYHLEEGEELFFQVKGDMCLKVLEKGKPKDIIIKEGEMFLLPSRFNHSPQRFENTVGLVIERERLPEEIDGLRYFCEDGVTVLWEKFFHCTDLTQIAPVIKEFFESEEHKTGKPSKESSCSINVDTETELMEPFPLKQWLKDNKDSYRSGSMAIFEKGEFKVHAHGSGEQEGHSQGEMWFWQLEGKATVNVDEITRELNKNDVLMITAGSDFRVKREEGSVGLSITVDSLANK.

Residues 1–154 (MMEWIDENSS…SEEHKTGKPS (154 aa)) form a domain A (catalytic) region. R38 serves as a coordination point for O2. Residues H42, E48, and H86 each contribute to the Fe cation site. E48 is a substrate binding site. 2 residues coordinate substrate: R90 and E100. Positions 155-169 (KESSCSINVDTETEL) are linker. Positions 170–272 (MEPFPLKQWL…SITVDSLANK (103 aa)) are domain B.

Belongs to the 3-HAO family. Fe(2+) is required as a cofactor.

Its subcellular location is the cytoplasm. It catalyses the reaction 3-hydroxyanthranilate + O2 = (2Z,4Z)-2-amino-3-carboxymuconate 6-semialdehyde. It participates in cofactor biosynthesis; NAD(+) biosynthesis; quinolinate from L-kynurenine: step 3/3. In terms of biological role, catalyzes the oxidative ring opening of 3-hydroxyanthranilate to 2-amino-3-carboxymuconate semialdehyde, which spontaneously cyclizes to quinolinate. This chain is 3-hydroxyanthranilate 3,4-dioxygenase, found in Nematostella vectensis (Starlet sea anemone).